The following is a 184-amino-acid chain: Ras-related protein Rap-1b (184 aa).

Residue 10-17 (GSGGVGKS) coordinates GTP. Residues 32 to 40 (YDPTIEDSY) carry the Effector region motif. GTP contacts are provided by residues 57–61 (DTAGT) and 116–119 (NKCD). Residue Cys181 is modified to Cysteine methyl ester. A lipid anchor (S-geranylgeranyl cysteine) is attached at Cys181. Positions 182-184 (HLL) are cleaved as a propeptide — removed in mature form.

It belongs to the small GTPase superfamily. Ras family.

Its subcellular location is the cell membrane. The protein localises to the cytoplasm. It is found in the cytosol. The protein resides in the cell junction. The enzyme catalyses GTP + H2O = GDP + phosphate + H(+). Its function is as follows. Probable GTP-binding protein that possesses GTPase activity. May play a role in endothelial cell polarity and endothelial barrier function. The chain is Ras-related protein Rap-1b (rap1b) from Xenopus laevis (African clawed frog).